We begin with the raw amino-acid sequence, 283 residues long: Ribosomal RNA small subunit methyltransferase A (283 aa).

S-adenosyl-L-methionine contacts are provided by Asn-29, Leu-31, Gly-56, Glu-77, Asp-102, and Asn-123.

This sequence belongs to the class I-like SAM-binding methyltransferase superfamily. rRNA adenine N(6)-methyltransferase family. RsmA subfamily.

Its subcellular location is the cytoplasm. It carries out the reaction adenosine(1518)/adenosine(1519) in 16S rRNA + 4 S-adenosyl-L-methionine = N(6)-dimethyladenosine(1518)/N(6)-dimethyladenosine(1519) in 16S rRNA + 4 S-adenosyl-L-homocysteine + 4 H(+). In terms of biological role, specifically dimethylates two adjacent adenosines (A1518 and A1519) in the loop of a conserved hairpin near the 3'-end of 16S rRNA in the 30S particle. May play a critical role in biogenesis of 30S subunits. This chain is Ribosomal RNA small subunit methyltransferase A, found in Acidobacterium capsulatum (strain ATCC 51196 / DSM 11244 / BCRC 80197 / JCM 7670 / NBRC 15755 / NCIMB 13165 / 161).